The following is a 367-amino-acid chain: Phosphoglycerate kinase (367 aa).

Residues Val1, Asp2, Phe3, Asn4, Arg17, Ser40, His41, Gly43, Arg44, Leu98, Arg99, His146, and Arg147 each contribute to the (2R)-3-phosphoglycerate site. Gly190 lines the ADP pocket. Position 190 (Gly190) interacts with CDP. AMP contacts are provided by Ala191 and Lys192. Ala191 provides a ligand contact to ATP. Ala191 is a Mg(2+) binding site. Mg(2+) contacts are provided by Ala194 and Asp195. Asp195 serves as a coordination point for CDP. An AMP-binding site is contributed by Lys196. An ATP-binding site is contributed by Lys196. Position 214 (Gly214) interacts with ADP. Position 214 (Gly214) interacts with CDP. 2 residues coordinate AMP: Gly215 and Gly289. Residues Gly215 and Gly289 each contribute to the ATP site. CDP is bound by residues Gly314 and Phe319. Phe319 lines the ADP pocket. An AMP-binding site is contributed by Glu320. Residues Glu320, Asp351, and Thr352 each coordinate ATP. Asp351 contacts Mg(2+).

Belongs to the phosphoglycerate kinase family. As to quaternary structure, monomer. The cofactor is Mg(2+).

The catalysed reaction is (2R)-3-phosphoglycerate + ATP = (2R)-3-phospho-glyceroyl phosphate + ADP. Its pathway is carbohydrate degradation; glycolysis; pyruvate from D-glyceraldehyde 3-phosphate: step 2/5. The protein is Phosphoglycerate kinase (PGK) of Paramecium primaurelia.